A 201-amino-acid chain; its full sequence is dTTP/UTP pyrophosphatase (201 aa).

Residue Asp79 is the Proton acceptor of the active site.

The protein belongs to the Maf family. YhdE subfamily. The cofactor is a divalent metal cation.

It localises to the cytoplasm. The enzyme catalyses dTTP + H2O = dTMP + diphosphate + H(+). It carries out the reaction UTP + H2O = UMP + diphosphate + H(+). Its function is as follows. Nucleoside triphosphate pyrophosphatase that hydrolyzes dTTP and UTP. May have a dual role in cell division arrest and in preventing the incorporation of modified nucleotides into cellular nucleic acids. In Hahella chejuensis (strain KCTC 2396), this protein is dTTP/UTP pyrophosphatase.